The sequence spans 501 residues: Raftlin-2 (501 aa).

2 disordered regions span residues 1 to 20 (MGCGLRKLEDPDDSSPGKIF) and 196 to 238 (SWNE…SRKG). Residue Gly-2 is the site of N-myristoyl glycine attachment. Residue Cys-3 is the site of S-palmitoyl cysteine attachment. Polar residues predominate over residues 224–233 (MEQNGSPSSS). Ser-405 is subject to Phosphoserine. The segment at 407–454 (AQTTDKKASRRIKGEDKNKATSRSIGLDTTTPQPAESRHPPEECRLSP) is disordered. A Phosphothreonine modification is found at Thr-409. Over residues 410–425 (TDKKASRRIKGEDKNK) the composition is skewed to basic and acidic residues. Over residues 427–440 (TSRSIGLDTTTPQP) the composition is skewed to polar residues. Ser-430 is modified (phosphoserine). Residues 442 to 451 (ESRHPPEECR) show a composition bias toward basic and acidic residues.

The protein belongs to the raftlin family.

Its subcellular location is the cell membrane. Upon bacterial lipopolysaccharide stimulation, mediates clathrin-dependent internalization of TLR4 in dendritic cells, resulting in activation of TICAM1-mediated signaling and subsequent IFNB1 production. May regulate B-cell antigen receptor mediated-signaling. This Pongo abelii (Sumatran orangutan) protein is Raftlin-2 (RFTN2).